A 142-amino-acid chain; its full sequence is Large-conductance mechanosensitive channel (142 aa).

2 consecutive transmembrane segments (helical) span residues 14–34 and 82–102; these read VMDLAVGVIIGAAFSKIVDSV and GNFITVFINFLILAWIIFLLI.

This sequence belongs to the MscL family. As to quaternary structure, homopentamer.

The protein resides in the cell inner membrane. Its function is as follows. Channel that opens in response to stretch forces in the membrane lipid bilayer. May participate in the regulation of osmotic pressure changes within the cell. This chain is Large-conductance mechanosensitive channel, found in Sinorhizobium medicae (strain WSM419) (Ensifer medicae).